Consider the following 388-residue polypeptide: Succinate--CoA ligase [ADP-forming] subunit beta (388 aa).

Positions 9-245 (KELLASYGLP…KSQENERELK (237 aa)) constitute an ATP-grasp domain. ATP-binding positions include Lys-46, 53 to 55 (GRG), Glu-100, Tyr-103, and Glu-108. The Mg(2+) site is built by Asn-200 and Asp-214. Residues Asn-265 and 322-324 (GIV) contribute to the substrate site.

Belongs to the succinate/malate CoA ligase beta subunit family. Heterotetramer of two alpha and two beta subunits. The cofactor is Mg(2+).

The catalysed reaction is succinate + ATP + CoA = succinyl-CoA + ADP + phosphate. The enzyme catalyses GTP + succinate + CoA = succinyl-CoA + GDP + phosphate. It participates in carbohydrate metabolism; tricarboxylic acid cycle; succinate from succinyl-CoA (ligase route): step 1/1. Succinyl-CoA synthetase functions in the citric acid cycle (TCA), coupling the hydrolysis of succinyl-CoA to the synthesis of either ATP or GTP and thus represents the only step of substrate-level phosphorylation in the TCA. The beta subunit provides nucleotide specificity of the enzyme and binds the substrate succinate, while the binding sites for coenzyme A and phosphate are found in the alpha subunit. The chain is Succinate--CoA ligase [ADP-forming] subunit beta from Neisseria meningitidis serogroup B (strain ATCC BAA-335 / MC58).